Reading from the N-terminus, the 241-residue chain is Ashwin (241 aa).

3 disordered regions span residues 1–21 (MAAQ…SARS), 82–102 (KMME…SVTA), and 212–241 (KRSV…CTWP). Residues 11 to 21 (GGKEERVSARS) are compositionally biased toward basic and acidic residues.

Belongs to the ashwin family.

It is found in the nucleus. The sequence is that of Ashwin from Gallus gallus (Chicken).